Reading from the N-terminus, the 308-residue chain is Cytochrome b (308 aa).

4 helical membrane passes run 1–21 (FGSLLGICLLTQIITGLLLAT), 45–66 (WLIRNLHANGASFFFICIYIHI), 81–101 (WNVGVILLLTLMATAFVGYVL), and 146–166 (FFALHFLLPFAITGLTLVHLT). Positions 51 and 65 each coordinate heme b. Residues H150 and H164 each contribute to the heme b site. Residue H169 participates in a ubiquinone binding. 3 consecutive transmembrane segments (helical) span residues 194 to 214 (MKDILGFALMIIPLAALALFS), 256 to 276 (LGGVLALAASILVLFLIPLLH), and 288 to 308 (LSQILFWTLVANLLILTWVGS).

It belongs to the cytochrome b family. In terms of assembly, the cytochrome bc1 complex contains 11 subunits: 3 respiratory subunits (MT-CYB, CYC1 and UQCRFS1), 2 core proteins (UQCRC1 and UQCRC2) and 6 low-molecular weight proteins (UQCRH/QCR6, UQCRB/QCR7, UQCRQ/QCR8, UQCR10/QCR9, UQCR11/QCR10 and a cleavage product of UQCRFS1). This cytochrome bc1 complex then forms a dimer. Requires heme b as cofactor.

Its subcellular location is the mitochondrion inner membrane. In terms of biological role, component of the ubiquinol-cytochrome c reductase complex (complex III or cytochrome b-c1 complex) that is part of the mitochondrial respiratory chain. The b-c1 complex mediates electron transfer from ubiquinol to cytochrome c. Contributes to the generation of a proton gradient across the mitochondrial membrane that is then used for ATP synthesis. The sequence is that of Cytochrome b (MT-CYB) from Ptiloprora plumbea (Leaden honeyeater).